A 201-amino-acid polypeptide reads, in one-letter code: NAD(P)H quinone oxidoreductase PST2 (201 aa).

Residues 6 to 192 (VAIIIYSLYH…SIAQQQGEDF (187 aa)) form the Flavodoxin-like domain. FMN is bound by residues 12–16 (SLYHH) and 112–164 (VFVS…SPWG).

It belongs to the WrbA family. FMN serves as cofactor.

The protein resides in the cell membrane. It catalyses the reaction a quinone + NADH + H(+) = a quinol + NAD(+). The catalysed reaction is a quinone + NADPH + H(+) = a quinol + NADP(+). Its function is as follows. Flavodoxin-like protein (FLP) that plays a role in cell wall integrity, oxidative stress protection and virulence. FLPs act as NAD(P)H quinone oxidoreductases. Reduces ubiquinone (coenzyme Q), enabling it to serve as an antioxidant in the membrane. The polypeptide is NAD(P)H quinone oxidoreductase PST2 (Candida albicans (strain SC5314 / ATCC MYA-2876) (Yeast)).